The following is a 929-amino-acid chain: MLGPHLPPPPLAPSEGRPTPCAFQIPDGSYRCLALEAEESSGEEGLQGEVGPTDLEEDEGVSRSGDDSACRVTQGTPQLPKALGIQPPSCSREEQGASQHDDRASQDWDVVKAGQMMTASPSPGPGPRVAQKPALGRSTSLTEKDLKEAKARSQQIAAQLTTPPSSNSRGVQLFNRRRQRVNEFTLESHGQRGQKPSQESLRVLPSSLPGHAPGLSLSSTSLPEPGPPRHPSPQSPDRGVPGHSMEGYSEEASLLRHLEKVASEEEEVPLVVYLKENAALLTANGLHLSQNREAQQSSPAPPPAEVHSPAADVNQNLASPSATLTTPTSNSSHNPPATDVNQNPPATVVPQSLPLSSIQQNSSEAQLPSNGTGPASKPSTLCADGQPQAPAEEVRCSTLLIDKVSTPATTTSTFSREATLIPSSRPPASDFMSSSLLIDIQPNTLVVSADQEMSGRAAATTPTKVYSEVHFTLAKPPSVVNRTARPFGIQAPGGTSQMERSPMLERRHFGEKAPAPQPPSLPDRSPRPQRHIMSRSPMVERRMMGQRSPASERRPLGNFTAPPTYTETLSTAPLASWVRSPPSYSVLYPSSDPKSSHLKGQAVPASKTGILEESMARRGSRKSMFTFVEKPKVTPNPDLLDLVQTADEKRRQRDQGEVGVEEEPFALGAEASNFQQEPAPRDRASPAAAEEVVPEWASCLKSPRIQAKPKPKPNQNLSEASGKGAELYARRQSRMEKYVIESSSHTPELARCPSPTMSLPSSWKYPTNAPGAFRVASRSPARTPPASLYHGYLPENGVLRPEPTKQPPYQLRPSLFVLSPIKEPAKVSPRAASPAKPSSLDLVPNLPKGALPPSPALPRPSRSSPGLYTSPGQDSLQPTAVSPPYGGDISPVSPSRAWSPRAKQAPRPSFSTRNAGIEAQVWKPSFCFK.

Met1 carries the post-translational modification N-acetylmethionine. Positions Met1 to Ala12 are enriched in pro residues. The disordered stretch occupies residues Met1 to Lys260. Composition is skewed to basic and acidic residues over residues Gly60–Ala69 and Ser91–Val110. Ser140 is modified (phosphoserine). A compositionally biased stretch (basic and acidic residues) spans Thr142 to Ala151. Positions Arg152–Gly170 are enriched in polar residues. Ser207 is subject to Phosphoserine. The span at Glu224–Gln234 shows a compositional bias: pro residues. At Ser263 the chain carries Phosphoserine. Residues Gly285–Ala389 form a disordered region. The segment covering Leu317 to Ser332 has biased composition (low complexity). An N-linked (GlcNAc...) asparagine glycan is attached at Asn330. Residues His333–Ser379 are compositionally biased toward polar residues. Residues Ser501 and Ser525 each carry the phosphoserine modification. Positions Phe509–Asn558 are disordered. Thr560 is subject to Phosphothreonine. The short motif at Pro562–Tyr565 is the PPxY motif element. Ser580 is modified (phosphoserine). The short motif at Pro581 to Tyr584 is the PPxY motif element. Disordered regions lie at residues Pro589–Ile610 and Lys630–Glu726. Positions Ala646–Gly656 are enriched in basic and acidic residues. Ser685, Ser702, and Tyr738 each carry phosphoserine. Over residues Ser685 to Ser698 the composition is skewed to low complexity. Residues Ile740 to Trp763 form a disordered region. Phosphothreonine is present on Thr746. Phosphoserine is present on residues Ser754, Ser758, and Ser779. Phosphothreonine is present on Thr783. Residues Pro784, Thr804, Arg812, Lys826, Ser833, Ser854, Pro871, and Pro894 each carry the phosphoserine modification. The segment covering Lys826–Ser839 has biased composition (low complexity). Residues Lys826–Gly916 are disordered. The segment covering Gly866 to Ala880 has biased composition (polar residues).

The protein belongs to the synaptopodin family. As to quaternary structure, interacts with BAIAP1. Interacts with actin. Interacts (via PPxY motifs) with WWC1 (via WW domains). O-glycosylated. Expressed in cerebral cortex.

The protein resides in the cytoplasm. It localises to the cytoskeleton. It is found in the cell junction. Its subcellular location is the tight junction. The protein localises to the perikaryon. The protein resides in the cell projection. It localises to the dendritic spine. It is found in the postsynaptic density. Its subcellular location is the synapse. The protein localises to the cytosol. In terms of biological role, actin-associated protein that may play a role in modulating actin-based shape and motility of dendritic spines and renal podocyte foot processes. Seems to be essential for the formation of spine apparatuses in spines of telencephalic neurons, which is involved in synaptic plasticity. The chain is Synaptopodin (SYNPO) from Homo sapiens (Human).